Here is a 218-residue protein sequence, read N- to C-terminus: Ribosomal RNA small subunit methyltransferase J (218 aa).

S-adenosyl-L-methionine is bound by residues 55–56 (RD), 71–72 (ER), and Asp123.

Belongs to the methyltransferase superfamily. RsmJ family.

Its subcellular location is the cytoplasm. The enzyme catalyses guanosine(1516) in 16S rRNA + S-adenosyl-L-methionine = N(2)-methylguanosine(1516) in 16S rRNA + S-adenosyl-L-homocysteine + H(+). Its function is as follows. Specifically methylates the guanosine in position 1516 of 16S rRNA. This chain is Ribosomal RNA small subunit methyltransferase J, found in Rhodopseudomonas palustris (strain HaA2).